The chain runs to 554 residues: MTSVHTLPDITATPAWDALRKHHDRIGDTHLRQFFEEDPDRGRELTVTVGDLYIDYSKHRVTRETLRLLVDLARTAKLEERRDQMFAGVHINTSEDRAVLHTALRLPRDAELIVDGRNVVADVHEVLDAMGEFTDRLRSGEWTGATGKRISTVVNIGIGGSDLGPVMVYQALRHYADAGISARFVSNVDPADLIATLADLDPATTLFIVASKTFSTLETLTNATAARRWITDALGDAAVAHHFVAVSTNKRLVDDFGINTDNMFGFWDWVGGRYSVDSAIGLSVMAVIGREAFADFLSGFHIVDRHFQTAPLESNAPVLLGLIGLWYSNFMGAQSRAVLPYSNDLARFAAYLQQLTMESNGKSTRADGSPVTTDTGEIFWGEPGTNGQHAFYQLLHQGTRLVPADFIGFSQPIDDLPTAEGSGSMHDLLMSNFFAQTQVLAFGKTAEEIAAEGTPADIVPHKVMPGNRPSTSILANRLTPSVLGQLIALYEHQVFTEGVIWGIDSFDQWGVELGKTQAKALLPVITANNSPAPQSDSSTDALVRRYRSERGRTS.

The active-site Proton donor is the E358. Residues H389 and K515 contribute to the active site. A compositionally biased stretch (polar residues) spans 527–540; sequence ANNSPAPQSDSSTD. Residues 527-554 are disordered; that stretch reads ANNSPAPQSDSSTDALVRRYRSERGRTS. Positions 542-554 are enriched in basic and acidic residues; it reads LVRRYRSERGRTS.

Belongs to the GPI family.

The protein localises to the cytoplasm. The enzyme catalyses alpha-D-glucose 6-phosphate = beta-D-fructose 6-phosphate. The protein operates within carbohydrate biosynthesis; gluconeogenesis. Its pathway is carbohydrate degradation; glycolysis; D-glyceraldehyde 3-phosphate and glycerone phosphate from D-glucose: step 2/4. Functionally, catalyzes the reversible isomerization of glucose-6-phosphate to fructose-6-phosphate. The polypeptide is Glucose-6-phosphate isomerase (Mycolicibacterium paratuberculosis (strain ATCC BAA-968 / K-10) (Mycobacterium paratuberculosis)).